The primary structure comprises 113 residues: Antisense of depressing factor protein 1 (113 aa).

Residues 1–11 are compositionally biased toward basic residues; it reads MGKCSMKKKGV. Residues 1–35 form a disordered region; the sequence is MGKCSMKKKGVGKNVGVGKKVQKKRSISTAERKRT.

Belongs to the ADF1 family.

The protein localises to the nucleus. In terms of biological role, transcriptional repressor which negatively regulates transcription of FYV5 by binding to the promoter on the sense strand. The polypeptide is Antisense of depressing factor protein 1 (Saccharomyces cerevisiae (strain ATCC 204508 / S288c) (Baker's yeast)).